Reading from the N-terminus, the 656-residue chain is Translation factor GUF1, mitochondrial (656 aa).

The transit peptide at 1–28 (MWKGLLQSTRAAWRGPCVRAPRLPFFRR) directs the protein to the mitochondrion. The tr-type G domain occupies 55 to 235 (ERYRNFSIVA…NVIENIPGPD (181 aa)). GTP-binding positions include 64–71 (AHVDHGKS), 128–132 (DTPGH), and 182–185 (NKID).

It belongs to the TRAFAC class translation factor GTPase superfamily. Classic translation factor GTPase family. LepA subfamily.

It localises to the mitochondrion inner membrane. It carries out the reaction GTP + H2O = GDP + phosphate + H(+). In terms of biological role, promotes mitochondrial protein synthesis. May act as a fidelity factor of the translation reaction, by catalyzing a one-codon backward translocation of tRNAs on improperly translocated ribosomes. Binds to mitochondrial ribosomes in a GTP-dependent manner. The chain is Translation factor GUF1, mitochondrial from Yarrowia lipolytica (strain CLIB 122 / E 150) (Yeast).